The chain runs to 358 residues: MQKIIHVDMDCFYAAVEMRDFPELRGKPIAVGGRSDRRGVISTCNYEARQFGVRSAMASGYALKLCPDLILVPGRMQVYKEVSNQIRAVFERYTDLIEPLSLDEAYLDVTESSHCKGSATLMAEAIRAEILAETGLTASAGIAPVKFLAKIASDLNKPNGQYVIRPEMIEEFVKTLPLIKIPGVGKVTAKKLADLGLHTCSDIQAYPEPKLVERFGKFGSVLIERSKGIDKRAILPNRERKSVGVETTLAKDIHTLEQCRAVMPQLIQELGARVSRSAKDRAINKQVVKLKFEDFKQTTIEHRSDEISVNLFYQLLEQAMERQHERGIRLLGVSVGLASNSIASEQADVDSSQMDLGF.

In terms of domain architecture, UmuC spans 4–185 (IIHVDMDCFY…LPLIKIPGVG (182 aa)). Mg(2+) is bound by residues D8 and D103. The active site involves E104.

This sequence belongs to the DNA polymerase type-Y family. As to quaternary structure, monomer. Mg(2+) is required as a cofactor.

It is found in the cytoplasm. The enzyme catalyses DNA(n) + a 2'-deoxyribonucleoside 5'-triphosphate = DNA(n+1) + diphosphate. Poorly processive, error-prone DNA polymerase involved in untargeted mutagenesis. Copies undamaged DNA at stalled replication forks, which arise in vivo from mismatched or misaligned primer ends. These misaligned primers can be extended by PolIV. Exhibits no 3'-5' exonuclease (proofreading) activity. May be involved in translesional synthesis, in conjunction with the beta clamp from PolIII. This chain is DNA polymerase IV, found in Shewanella halifaxensis (strain HAW-EB4).